Reading from the N-terminus, the 428-residue chain is Spliceosome RNA helicase DDX39B (428 aa).

Acidic residues predominate over residues 1-19 (MAENDVDNELLDYEDDEVE). The disordered stretch occupies residues 1-31 (MAENDVDNELLDYEDDEVETAAGGDGAEAPA). A2 is modified (N-acetylalanine). The residue at position 36 (K36) is an N6-acetyllysine; alternate. K36 participates in a covalent cross-link: Glycyl lysine isopeptide (Lys-Gly) (interchain with G-Cter in SUMO2); alternate. Phosphoserine is present on residues S38 and S41. The Q motif signature appears at 45–73 (SGFRDFLLKPELLRAIVDCGFEHPSEVQH). One can recognise a Helicase ATP-binding domain in the interval 76-249 (IPQAILGMDV…RKFMQDPMEI (174 aa)). An ATP-binding site is contributed by 89–96 (AKSGMGKT). T172 bears the Phosphothreonine mark. Positions 196-199 (DECD) match the DECD box motif. The Helicase C-terminal domain maps to 261–422 (GLQQYYVKLK…ELPDEIDISS (162 aa)).

The protein belongs to the DEAD box helicase family. DECD subfamily. In terms of assembly, homodimer, and heterodimer with DDX39A. DDX39B interacts with the THO subcomplex to form the THO-DDX39B complex which multimerizes into a 28-subunit tetrameric assembly. Component of the transcription/export (TREX) complex at least composed of ALYREF/THOC4, DDX39B, SARNP/CIP29, CHTOP and the THO subcomplex; in the complex interacts with THOC2. THOC1-THOC2-THOC3-DDX39B subcomplex is sufficient for the interaction with export factor NXF1-NXT1. TREX seems to have a dynamic structure involving ATP-dependent remodeling. Within the TREX complex bridges ALYREF/THOC4 and the THO subcomplex, and, in a ATP-dependent manner, ALYREF/THOC4 and SARNP/CIP29. Component of the spliceosome. Interacts directly with U2AF2. Interacts with RBM8A, RNPS1 and SRRM1, FYTTD1/UIF, THOC1, MX1 and POLDIP3. Interacts with LUZP4. Interacts with SARNP/CIP29 (via the C-terminal domain); the interaction is direct and facilitates RNA binding of DDX39B.

The protein resides in the nucleus. It localises to the nucleus speckle. It is found in the cytoplasm. It catalyses the reaction ATP + H2O = ADP + phosphate + H(+). Its function is as follows. Involved in nuclear export of spliced and unspliced mRNA. Component of the TREX complex which is thought to couple mRNA transcription, processing and nuclear export, and specifically associates with spliced mRNA and not with unspliced pre-mRNA. The TREX complex is recruited to spliced mRNAs by a transcription-independent mechanism, binds to mRNA upstream of the exon-junction complex (EJC) and is recruited in a splicing- and cap-dependent manner to a region near the 5' end of the mRNA where it functions in mRNA export to the cytoplasm via the TAP/NXF1 pathway. The THOC1-THOC2-THOC3 core complex alone is sufficient to promote ATPase activity of DDX39B; in the complex THOC2 is the only component that directly interacts with DDX39B. Associates with SARNP/CIP29, which facilitates RNA binding of DDX39B and likely plays a role in mRNA export. May undergo several rounds of ATP hydrolysis during assembly of TREX to drive subsequent loading of components such as ALYREF/THOC4 and CHTOP onto mRNA. Also associates with pre-mRNA independent of ALYREF/THOC4. Involved in the nuclear export of intronless mRNA; the ATP-bound form is proposed to recruit export adapter ALYREF/THOC4 to intronless mRNA; its ATPase activity is cooperatively stimulated by RNA and ALYREF/THOC4 and ATP hydrolysis is thought to trigger the dissociation from RNA to allow the association of ALYREF/THOC4 and the NXF1-NXT1 heterodimer. Involved in transcription elongation and genome stability. Functionally, splice factor that is required for the first ATP-dependent step in spliceosome assembly and for the interaction of U2 snRNP with the branchpoint. Has both RNA-stimulated ATP binding/hydrolysis activity and ATP-dependent RNA unwinding activity. Even with the stimulation of RNA, the ATPase activity is weak. Can only hydrolyze ATP but not other NTPs. The RNA stimulation of ATPase activity does not have a strong preference for the sequence and length of the RNA. However, ssRNA stimulates the ATPase activity much more strongly than dsRNA. Can unwind 5' or 3' overhangs or blunt end RNA duplexes in vitro. The ATPase and helicase activities are not influenced by U2AF2; the effect of ALYREF/THOC4 is reported conflictingly. In Bos taurus (Bovine), this protein is Spliceosome RNA helicase DDX39B (DDX39B).